The sequence spans 226 residues: X-linked lymphocyte-regulated protein 3A (226 aa).

Residues 1-18 (MSSRERKATDTAGRHSRM) show a composition bias toward basic and acidic residues. The tract at residues 1–72 (MSSRERKATD…QDLVQEFEEP (72 aa)) is disordered. Residues 21–30 (NLSSDDSQNP) show a composition bias toward polar residues. Composition is skewed to basic and acidic residues over residues 39–48 (EVLDAGREDI) and 56–65 (QQARKEKQDL). Residues 155 to 210 (ETLTLQKNRMEEFKSLCEKYLEKLEVLRDSRGNSIAEELRRLIATLEIKLLMLHNQ) are a coiled coil.

Belongs to the XLR/SYCP3 family. Expressed in lymphoid cells.

The polypeptide is X-linked lymphocyte-regulated protein 3A (Xlr3a) (Mus musculus (Mouse)).